The chain runs to 468 residues: 5-carboxymethyl-2-hydroxymuconate semialdehyde dehydrogenase (468 aa).

Glu-244 is an active-site residue. Cys-278 serves as the catalytic Nucleophile.

The protein belongs to the aldehyde dehydrogenase family. As to quaternary structure, homodimer.

The catalysed reaction is 2-hydroxy-5-carboxymethylmuconate semialdehyde + NAD(+) + H2O = (2E,4Z)-5-hydroxypenta-2,4-diene-1,2,5-tricarboxylate + NADH + 2 H(+). The protein operates within aromatic compound metabolism; 4-hydroxyphenylacetate degradation; pyruvate and succinate semialdehyde from 4-hydroxyphenylacetate: step 3/7. In terms of biological role, catalyzes the conversion of 5-carboxymethyl-2-hydroxy-muconic semialdehyde (CHMS) into 5-carboxymethyl-2-hydroxy-muconic acid (CHM or (2E,4Z)-5-hydroxypenta-2,4-diene-1,2,5-tricarboxylate). Is involved in a meta-cleavage pathway for the catabolism of 4-hydroxyphenylacetate (4-HPA) via homoprotocatechuate (HPC or 3,4-dihydroxyphenylacetate). The chain is 5-carboxymethyl-2-hydroxymuconate semialdehyde dehydrogenase from Escherichia coli.